The following is a 519-amino-acid chain: Keratin, type II cytoskeletal 1b (519 aa).

The interval 1 to 166 (MSRQFSSQSA…DPEIQKIKTQ (166 aa)) is head. Residues R81 and R95 each carry the omega-N-methylarginine modification. The tract at residues 167–202 (EREQIKTLNNKFASFIDKVRFLEQQNQVLQTKWELL) is coil 1A. An IF rod domain is found at 167 to 480 (EREQIKTLNN…ELLEGEESRM (314 aa)). The segment at 203–221 (QQVNTSTRTSSLEPIFEEF) is linker 1. Residues 222-313 (INQLQRQVDV…YLFDTELSQI (92 aa)) form a coil 1B region. The linker 12 stretch occupies residues 314–337 (QTHVSDTNVILSMDNNRSLDLDSI). The coil 2 stretch occupies residues 338–476 (INAVRTQYEL…ATYRELLEGE (139 aa)). The tail stretch occupies residues 477-519 (ESRMSGALQSQVSIWALPSNEGNDLGERLHDPQSQVPVPKLGC). Residues 499–519 (NDLGERLHDPQSQVPVPKLGC) are disordered.

It belongs to the intermediate filament family. In terms of processing, undergoes deimination of some arginine residues (citrullination).

This is Keratin, type II cytoskeletal 1b (Krt77) from Rattus norvegicus (Rat).